The sequence spans 363 residues: Pyrimidine monooxygenase RutA (363 aa).

FMN is bound by residues 49 to 50, Asn115, Glu124, 140 to 141, and Ser190; these read IK and RY.

Belongs to the NtaA/SnaA/DszA monooxygenase family. RutA subfamily.

The catalysed reaction is uracil + FMNH2 + NADH + O2 = (Z)-3-ureidoacrylate + FMN + NAD(+) + H2O + H(+). The enzyme catalyses thymine + FMNH2 + NADH + O2 = (Z)-2-methylureidoacrylate + FMN + NAD(+) + H2O + H(+). Catalyzes the pyrimidine ring opening between N-3 and C-4 by an unusual flavin hydroperoxide-catalyzed mechanism, adding oxygen atoms in the process to yield ureidoacrylate peracid, that immediately reacts with FMN forming ureidoacrylate and FMN-N(5)-oxide. The FMN-N(5)-oxide reacts spontaneously with NADH to produce FMN. Requires the flavin reductase RutF to regenerate FMN in vivo. The sequence is that of Pyrimidine monooxygenase RutA from Klebsiella variicola (strain At-22).